Reading from the N-terminus, the 610-residue chain is MAQEIDLSALKELEREAILQVLYRDQAVQNTEEERTRKLKTHLQHLRWKGAKNTDWEHKEKCCARCQQVLGFLLHRGAVCRGCSHRVCAQCRVFLRGTHAWKCTVCFEDRNVKIKTGEWFYEERAKKFPTGGKHETVGGQLLQSYQKLSKISVVPPTPPPVSESQCSRSPGRLQEFGQFRGFNKSVENLFLSLATHVKKLSKSQNDMTSEKHLLATGPRQCVGQTERRSQSDTAVNVTTRKVSAPDILKPLNQEDPKCSTNPILKQQNLPSSPAPSTIFSGGFRHGSLISIDSTCTEMGNFDNANVTGEIEFAIHYCFKTHSLEICIKACKNLAYGEEKKKKCNPYVKTYLLPDRSSQGKRKTGVQRNTVDPTFQETLKYQVAPAQLVTRQLQVSVWHLGTLARRVFLGEVIIPLATWDFEDSTTQSFRWHPLRAKAEKYEDSVPQSNGELTVRAKLVLPSRPRKLQEAQEGTDQPSLHGQLCLVVLGAKNLPVRPDGTLNSFVKGCLTLPDQQKLRLKSPVLRKQACPQWKHSFVFSGVTPAQLRQSSLELTVWDQALFGMNDRLLGGTRLGSKGDTAVGGDACSLSKLQWQKVLSSPNLWTDMTLVLH.

The RabBD domain maps to 4–123 (EIDLSALKEL…IKTGEWFYEE (120 aa)). The tract at residues 219–239 (RQCVGQTERRSQSDTAVNVTT) is disordered. 2 C2 domains span residues 306–428 (VTGE…TQSF) and 462–603 (RPRK…NLWT).

In terms of assembly, monomer. Binds NRXN1. Binds RAB27A that has been activated by GTP-binding via its N-terminus.

It localises to the endomembrane system. Functionally, may act as Rab effector protein and play a role in vesicle trafficking. Binds phospholipids in the presence of calcium ions. The chain is Synaptotagmin-like protein 3 (SYTL3) from Homo sapiens (Human).